The sequence spans 91 residues: Potassium channel toxin TtrKIK (91 aa).

An N-terminal signal peptide occupies residues 1 to 25; that stretch reads MVATNRCCVFALLFALLLVHSLTEA. Positions 26–44 are excised as a propeptide; sequence GKGKEVLGKIKDKLIEAKD. In terms of domain architecture, BetaSPN-type CS-alpha/beta spans 58 to 91; it reads EYACPAIEKFCEDHCAAKKAVGKCDDFKCNCIKL. 3 disulfides stabilise this stretch: Cys-61/Cys-81, Cys-68/Cys-86, and Cys-72/Cys-88.

This sequence belongs to the long chain scorpion toxin family. Class 2 subfamily. In terms of tissue distribution, expressed by the venom gland.

It is found in the secreted. The full peptide presents antibacterial and cytotoxic activities. The synthetic C-terminus (AA 33-76) inhibits voltage-gated potassium channels Kv1.1/KCNA1, Kv1.2/KCNA2, and Kv1.3/KCNA3. The polypeptide is Potassium channel toxin TtrKIK (Tityus trivittatus (Argentinean scorpion)).